Consider the following 156-residue polypeptide: Small ribosomal subunit protein uS7 (156 aa).

This sequence belongs to the universal ribosomal protein uS7 family. As to quaternary structure, part of the 30S ribosomal subunit. Contacts proteins S9 and S11.

Functionally, one of the primary rRNA binding proteins, it binds directly to 16S rRNA where it nucleates assembly of the head domain of the 30S subunit. Is located at the subunit interface close to the decoding center, probably blocks exit of the E-site tRNA. The polypeptide is Small ribosomal subunit protein uS7 (Tremblaya princeps).